The sequence spans 259 residues: Tonin (259 aa).

Positions 1–18 are cleaved as a signal peptide; the sequence is MWLQILSLVLSVGRIDAA. Positions 19 to 24 are cleaved as a propeptide — activation peptide; sequence PPGQSR. Residues 25-256 form the Peptidase S1 domain; sequence IVGGYKCEKN…FTSWIKKVMK (232 aa). Cystine bridges form between C31–C171, C48–C64, C150–C217, C182–C196, and C207–C232. The active-site Charge relay system is the H63. H63 contributes to the Zn(2+) binding site. N106 carries N-linked (GlcNAc...) asparagine glycosylation. Zn(2+)-binding residues include H113 and H115. The active-site Charge relay system is the D118. The N-linked (GlcNAc...) asparagine glycan is linked to N189. The active-site Charge relay system is the S211.

The protein belongs to the peptidase S1 family. Kallikrein subfamily. As to quaternary structure, monomer. Zn(2+) serves as cofactor. Found in submaxillary gland.

It catalyses the reaction Preferential cleavage of Arg-|-Xaa bonds in small molecule substrates. Highly selective action to release kallidin (lysyl-bradykinin) from kininogen involves hydrolysis of Met-|-Xaa or Leu-|-Xaa.. In terms of biological role, this protein has both trypsin- and chymotrypsin-like activities, being able to release angiotensin II from angiotensin I or angiotensinogen. The polypeptide is Tonin (Klk2) (Rattus norvegicus (Rat)).